The chain runs to 386 residues: Protein phosphatase methylesterase 1 (386 aa).

Residues 1–38 (MSALEKSMHLGRLPSRPPLPGSGGSQSGAKMRMGPGRK) form a disordered region. Ser15 carries the post-translational modification Phosphoserine. Residue Arg16 is modified to Asymmetric dimethylarginine; alternate. Arg16 carries the omega-N-methylarginine; alternate modification. Ser156 is a catalytic residue. A compositionally biased stretch (acidic residues) spans 255–265 (IEEEEEDEEGS). The disordered stretch occupies residues 255–280 (IEEEEEDEEGSESVNKRKKEDDMETK). Basic and acidic residues predominate over residues 268–280 (VNKRKKEDDMETK). His349 is a catalytic residue.

The protein belongs to the AB hydrolase superfamily. As to quaternary structure, binds PPP2CA and PPP2CB. Post-translationally, phosphorylated by SIK1 following increases in intracellular sodium, leading to dissociation from the protein phosphatase 2A (PP2A) complex and subsequent dephosphorylation of sodium/potassium-transporting ATPase ATP1A1.

It catalyses the reaction [phosphatase 2A protein]-C-terminal L-leucine methyl ester + H2O = [phosphatase 2A protein]-C-terminal L-leucine + methanol + H(+). Demethylates proteins that have been reversibly carboxymethylated. Demethylates PPP2CB (in vitro) and PPP2CA. Binding to PPP2CA displaces the manganese ion and inactivates the enzyme. This Rattus norvegicus (Rat) protein is Protein phosphatase methylesterase 1 (Ppme1).